The sequence spans 313 residues: RHOMBOID-like protein 7 (313 aa).

Over residues 1-11 (MLSTAAEEDPE) the composition is skewed to acidic residues. The segment at 1–24 (MLSTAAEEDPEGGSRETNNGGETT) is disordered. A compositionally biased stretch (polar residues) spans 15–24 (RETNNGGETT). 7 consecutive transmembrane segments (helical) span residues 31–51 (SWII…VMYY), 112–132 (WLHA…YIGV), 143–163 (VGTI…LFLE), 166–186 (ISVG…SELL), 196–216 (GVAI…GTLP), 221–241 (FAHI…LIHP), and 269–289 (LCIV…VILF). Ser171 acts as the Nucleophile in catalysis. His223 acts as the Charge relay system in catalysis.

This sequence belongs to the peptidase S54 family.

The protein resides in the membrane. It carries out the reaction Cleaves type-1 transmembrane domains using a catalytic dyad composed of serine and histidine that are contributed by different transmembrane domains.. Functionally, probable rhomboid-type serine protease that catalyzes intramembrane proteolysis. May function in embryo development. The protein is RHOMBOID-like protein 7 of Arabidopsis thaliana (Mouse-ear cress).